We begin with the raw amino-acid sequence, 104 residues long: Co-chaperonin GroES 1 (104 aa).

The protein belongs to the GroES chaperonin family. In terms of assembly, heptamer of 7 subunits arranged in a ring. Interacts with the chaperonin GroEL.

Its subcellular location is the cytoplasm. In terms of biological role, together with the chaperonin GroEL, plays an essential role in assisting protein folding. The GroEL-GroES system forms a nano-cage that allows encapsulation of the non-native substrate proteins and provides a physical environment optimized to promote and accelerate protein folding. GroES binds to the apical surface of the GroEL ring, thereby capping the opening of the GroEL channel. In Mesorhizobium japonicum (strain LMG 29417 / CECT 9101 / MAFF 303099) (Mesorhizobium loti (strain MAFF 303099)), this protein is Co-chaperonin GroES 1.